The sequence spans 437 residues: GTPase Obg (437 aa).

The Obg domain occupies 2–160 (SMFLDTAKIS…RQLELELKIL (159 aa)). In terms of domain architecture, OBG-type G spans 161-338 (ADVGLVGFPS…LLEATAELLA (178 aa)). Residues 167-174 (GFPSVGKS), 192-196 (FTTIV), 214-217 (DLPG), 284-287 (NKMD), and 319-321 (SSL) each bind GTP. Residues Ser174 and Thr194 each coordinate Mg(2+). The 79-residue stretch at 359-437 (GFAEAEKEFE…IGKFEFEFVD (79 aa)) folds into the OCT domain.

The protein belongs to the TRAFAC class OBG-HflX-like GTPase superfamily. OBG GTPase family. As to quaternary structure, monomer. Mg(2+) serves as cofactor.

Its subcellular location is the cytoplasm. In terms of biological role, an essential GTPase which binds GTP, GDP and possibly (p)ppGpp with moderate affinity, with high nucleotide exchange rates and a fairly low GTP hydrolysis rate. Plays a role in control of the cell cycle, stress response, ribosome biogenesis and in those bacteria that undergo differentiation, in morphogenesis control. This chain is GTPase Obg, found in Streptococcus pyogenes serotype M28 (strain MGAS6180).